A 661-amino-acid chain; its full sequence is Zeaxanthin epoxidase, chloroplastic (661 aa).

Residues 1-59 constitute a chloroplast transit peptide; that stretch reads MLLFRATLLPSPPFFHKTYFSHLSPVIFSDDPLPVSLQRNRVSGCRKQKWRQIRTLALQ. Residues 81-109 and 359-372 each bind FAD; these read RILI…LVFE and IFTW…LLGD. Residues 555-609 form the FHA domain; sequence HIIGSISHDDSEGISIHLPFPQVHKTHARIACKDNIFYLTDLQSQYGTWITDNEG.

FAD serves as cofactor. In terms of tissue distribution, expressed in flower buds, lips and leaves. Detected in roots.

Its subcellular location is the plastid. It is found in the chloroplast. It carries out the reaction all-trans-zeaxanthin + 4 reduced [2Fe-2S]-[ferredoxin] + 2 O2 + 4 H(+) = all-trans-violaxanthin + 4 oxidized [2Fe-2S]-[ferredoxin] + 2 H2O. It functions in the pathway plant hormone biosynthesis; abscisate biosynthesis. Zeaxanthin epoxidase that plays an important role in the xanthophyll cycle and abscisic acid (ABA) biosynthesis. Converts zeaxanthin into antheraxanthin and subsequently violaxanthin. The protein is Zeaxanthin epoxidase, chloroplastic (ZEP) of Oncidium hybrid cultivar (Orchid).